The chain runs to 348 residues: L-threonine 3-dehydrogenase (348 aa).

Cysteine 42 lines the Zn(2+) pocket. Residues threonine 44 and histidine 47 each act as charge relay system in the active site. Zn(2+)-binding residues include histidine 67, glutamate 68, cysteine 97, cysteine 100, cysteine 103, and cysteine 111. NAD(+) is bound by residues leucine 179, glutamate 199, arginine 204, 266–268, and 291–292; these read LGL and IT.

The protein belongs to the zinc-containing alcohol dehydrogenase family. In terms of assembly, homodimer. Homotetramer; dimer of dimers. Zn(2+) serves as cofactor.

The protein localises to the cytoplasm. The catalysed reaction is L-threonine + NAD(+) = (2S)-2-amino-3-oxobutanoate + NADH + H(+). Its pathway is amino-acid degradation; L-threonine degradation via oxydo-reductase pathway; glycine from L-threonine: step 1/2. Is totally inhibited by EDTA in vitro. Its function is as follows. Catalyzes the NAD(+)-dependent oxidation of L-threonine to 2-amino-3-ketobutyrate. Is much less efficient when using NADP(+) instead of NAD(+). To a lesser extent, also catalyzes the oxidation of L-serine and DL-threo-3-phenylserine, but not that of L-allo-threonine, D-threonine and D-allo-threonine and many other L-amino acids. This is L-threonine 3-dehydrogenase from Pyrococcus horikoshii (strain ATCC 700860 / DSM 12428 / JCM 9974 / NBRC 100139 / OT-3).